The chain runs to 66 residues: UPF0337 protein BP1738 (66 aa).

It belongs to the UPF0337 (CsbD) family.

The polypeptide is UPF0337 protein BP1738 (Bordetella pertussis (strain Tohama I / ATCC BAA-589 / NCTC 13251)).